Consider the following 605-residue polypeptide: Aspartate--tRNA(Asp/Asn) ligase (605 aa).

Glutamate 176 provides a ligand contact to L-aspartate. Residues 200-203 (QQFK) form an aspartate region. The L-aspartate site is built by arginine 222 and histidine 452. ATP is bound at residue 222 to 224 (RDE). ATP is bound at residue glutamate 490. Arginine 497 is an L-aspartate binding site. 542–545 (GIDR) contributes to the ATP binding site.

It belongs to the class-II aminoacyl-tRNA synthetase family. Type 1 subfamily. As to quaternary structure, homodimer.

It localises to the cytoplasm. It catalyses the reaction tRNA(Asx) + L-aspartate + ATP = L-aspartyl-tRNA(Asx) + AMP + diphosphate. In terms of biological role, aspartyl-tRNA synthetase with relaxed tRNA specificity since it is able to aspartylate not only its cognate tRNA(Asp) but also tRNA(Asn). Reaction proceeds in two steps: L-aspartate is first activated by ATP to form Asp-AMP and then transferred to the acceptor end of tRNA(Asp/Asn). The protein is Aspartate--tRNA(Asp/Asn) ligase of Rickettsia prowazekii (strain Madrid E).